The sequence spans 691 residues: Amino-acid acetyltransferase, mitochondrial (691 aa).

Over residues 1-27 (MSSTSLAWPRTAKSSLLQSADFSSTSK) the composition is skewed to polar residues. 2 disordered regions span residues 1 to 29 (MSSTSLAWPRTAKSSLLQSADFSSTSKGY) and 65 to 95 (RLKAQHSPKPQVKEPEKESKDDAPQPLPSGV). Residues 75-87 (QVKEPEKESKDDA) show a composition bias toward basic and acidic residues. The N-acetyltransferase domain occupies 512 to 681 (NRPRMSLDDP…YEAVCRSIQP (170 aa)).

It belongs to the acetyltransferase family.

The protein resides in the mitochondrion. The enzyme catalyses L-glutamate + acetyl-CoA = N-acetyl-L-glutamate + CoA + H(+). It participates in amino-acid biosynthesis; L-arginine biosynthesis; N(2)-acetyl-L-ornithine from L-glutamate: step 1/4. In terms of biological role, N-acetylglutamate synthase involved in arginine biosynthesis. This is Amino-acid acetyltransferase, mitochondrial (arg2) from Aspergillus terreus (strain NIH 2624 / FGSC A1156).